Here is a 629-residue protein sequence, read N- to C-terminus: DNA ligase B (629 aa).

Lysine 151 acts as the N6-AMP-lysine intermediate in catalysis. A compositionally biased stretch (polar residues) spans 588-597; the sequence is LQKQHGTNTR. The disordered stretch occupies residues 588 to 629; that stretch reads LQKQHGTNTRNEQKGDVRRVDVKQDNGTTWLPEQDSNLRPND. A compositionally biased stretch (basic and acidic residues) spans 598-611; the sequence is NEQKGDVRRVDVKQ. The span at 612–629 shows a compositional bias: polar residues; the sequence is DNGTTWLPEQDSNLRPND.

It belongs to the NAD-dependent DNA ligase family. LigB subfamily.

The catalysed reaction is NAD(+) + (deoxyribonucleotide)n-3'-hydroxyl + 5'-phospho-(deoxyribonucleotide)m = (deoxyribonucleotide)n+m + AMP + beta-nicotinamide D-nucleotide.. In terms of biological role, catalyzes the formation of phosphodiester linkages between 5'-phosphoryl and 3'-hydroxyl groups in double-stranded DNA using NAD as a coenzyme and as the energy source for the reaction. This Chromohalobacter salexigens (strain ATCC BAA-138 / DSM 3043 / CIP 106854 / NCIMB 13768 / 1H11) protein is DNA ligase B.